The primary structure comprises 92 residues: Large ribosomal subunit protein bL28 (92 aa).

It belongs to the bacterial ribosomal protein bL28 family.

The protein is Large ribosomal subunit protein bL28 of Borreliella afzelii (strain PKo) (Borrelia afzelii).